The chain runs to 282 residues: MEQIKTFILMTFLALIFMFFGGLIGGEQGVIIAFVVALGMNFFSYFFSDKLVLKHYHAVKVDENSAGGLYAIVRRLANAANVPMPSVYIIPEQIPNAFATGRNPNNAAVAVTEGLLNLLSENEIEGVLAHEMSHVRHYDILIGSVAAVFAGAIAILANFAKFGAVFGGNENNRQNGILMIVAAIIMPIAAAIIQMAISRSREYKADAGAANLTKHPEWLISALSKLENYAQNRTMQNATPQSAHMFIINPFSGVKSSFSQLFRTHPSTKDRIARLNEIKQSM.

The next 2 helical transmembrane spans lie at 6-26 (TFIL…LIGG) and 28-48 (QGVI…YFFS). Zn(2+) is bound at residue His130. Residue Glu131 is part of the active site. His134 is a Zn(2+) binding site. Helical transmembrane passes span 140-160 (ILIG…ANFA) and 177-197 (ILMI…QMAI). Residue Glu202 participates in Zn(2+) binding.

The protein belongs to the peptidase M48B family. It depends on Zn(2+) as a cofactor.

It localises to the cell inner membrane. This is Protease HtpX homolog from Campylobacter hominis (strain ATCC BAA-381 / DSM 21671 / CCUG 45161 / LMG 19568 / NCTC 13146 / CH001A).